The following is a 620-amino-acid chain: Chaperone protein HscA homolog (620 aa).

It belongs to the heat shock protein 70 family.

Its function is as follows. Chaperone involved in the maturation of iron-sulfur cluster-containing proteins. Has a low intrinsic ATPase activity which is markedly stimulated by HscB. The chain is Chaperone protein HscA homolog from Neisseria meningitidis serogroup A / serotype 4A (strain DSM 15465 / Z2491).